The chain runs to 128 residues: Small ribosomal subunit protein uS13 (128 aa).

A compositionally biased stretch (basic residues) spans 95–118; the sequence is GLPVRGQRTHTNARTRKGPKKGLV. The disordered stretch occupies residues 95 to 128; the sequence is GLPVRGQRTHTNARTRKGPKKGLVRKAAAPAPMA.

The protein belongs to the universal ribosomal protein uS13 family. Part of the 30S ribosomal subunit. Forms a loose heterodimer with protein S19. Forms two bridges to the 50S subunit in the 70S ribosome.

In terms of biological role, located at the top of the head of the 30S subunit, it contacts several helices of the 16S rRNA. In the 70S ribosome it contacts the 23S rRNA (bridge B1a) and protein L5 of the 50S subunit (bridge B1b), connecting the 2 subunits; these bridges are implicated in subunit movement. Contacts the tRNAs in the A and P-sites. The sequence is that of Small ribosomal subunit protein uS13 from Anaeromyxobacter dehalogenans (strain 2CP-1 / ATCC BAA-258).